A 78-amino-acid chain; its full sequence is D-alanyl carrier protein (78 aa).

One can recognise a Carrier domain in the interval 1-78 (MEFREQVLDL…KIVEALEELR (78 aa)). Serine 36 carries the post-translational modification O-(pantetheine 4'-phosphoryl)serine.

The protein belongs to the DltC family. Post-translationally, 4'-phosphopantetheine is transferred from CoA to a specific serine of apo-DCP.

The protein resides in the cytoplasm. Its pathway is cell wall biogenesis; lipoteichoic acid biosynthesis. Carrier protein involved in the D-alanylation of lipoteichoic acid (LTA). The loading of thioester-linked D-alanine onto DltC is catalyzed by D-alanine--D-alanyl carrier protein ligase DltA. The DltC-carried D-alanyl group is further transferred to cell membrane phosphatidylglycerol (PG) by forming an ester bond, probably catalyzed by DltD. D-alanylation of LTA plays an important role in modulating the properties of the cell wall in Gram-positive bacteria, influencing the net charge of the cell wall. The protein is D-alanyl carrier protein of Staphylococcus epidermidis (strain ATCC 35984 / DSM 28319 / BCRC 17069 / CCUG 31568 / BM 3577 / RP62A).